The following is a 121-amino-acid chain: uncharacterized protein (121 aa).

A helical transmembrane segment spans residues 6-26 (ITTASILLVVIVAFCAAAPMI).

It is found in the membrane. This is an uncharacterized protein from Caenorhabditis elegans.